A 486-amino-acid chain; its full sequence is LON peptidase N-terminal domain and RING finger protein C14F5.10c (486 aa).

The RING-type zinc-finger motif lies at 169–207; it reads CQICFGMLYDPVVSPCGHTFCGPCLMQALTQSPQCPTCR. In terms of domain architecture, Lon N-terminal spans 250–472; that stretch reads ESWLPLFISM…LVLIWLTQLQ (223 aa).

This chain is LON peptidase N-terminal domain and RING finger protein C14F5.10c, found in Schizosaccharomyces pombe (strain 972 / ATCC 24843) (Fission yeast).